Reading from the N-terminus, the 271-residue chain is Acetylglutamate kinase (271 aa).

Residues 41-42 (GG), Arg63, and Asn166 contribute to the substrate site.

The protein belongs to the acetylglutamate kinase family. ArgB subfamily.

It is found in the cytoplasm. It carries out the reaction N-acetyl-L-glutamate + ATP = N-acetyl-L-glutamyl 5-phosphate + ADP. The protein operates within amino-acid biosynthesis; L-arginine biosynthesis; N(2)-acetyl-L-ornithine from L-glutamate: step 2/4. In terms of biological role, catalyzes the ATP-dependent phosphorylation of N-acetyl-L-glutamate. The chain is Acetylglutamate kinase from Anaeromyxobacter sp. (strain Fw109-5).